The primary structure comprises 243 residues: Hydroxyacylglutathione hydrolase (243 aa).

The Zn(2+) site is built by H59, H61, D63, H64, H117, D135, and H173.

Belongs to the metallo-beta-lactamase superfamily. Glyoxalase II family. As to quaternary structure, monomer. It depends on Zn(2+) as a cofactor.

It catalyses the reaction an S-(2-hydroxyacyl)glutathione + H2O = a 2-hydroxy carboxylate + glutathione + H(+). Its pathway is secondary metabolite metabolism; methylglyoxal degradation; (R)-lactate from methylglyoxal: step 2/2. Its function is as follows. Thiolesterase that catalyzes the hydrolysis of S-D-lactoyl-glutathione to form glutathione and D-lactic acid. The protein is Hydroxyacylglutathione hydrolase of Acidiphilium cryptum (strain JF-5).